The chain runs to 236 residues: 2,3,4,5-tetrahydropyridine-2,6-dicarboxylate N-acetyltransferase (236 aa).

The protein belongs to the transferase hexapeptide repeat family. DapH subfamily.

It carries out the reaction (S)-2,3,4,5-tetrahydrodipicolinate + acetyl-CoA + H2O = L-2-acetamido-6-oxoheptanedioate + CoA. Its pathway is amino-acid biosynthesis; L-lysine biosynthesis via DAP pathway; LL-2,6-diaminopimelate from (S)-tetrahydrodipicolinate (acetylase route): step 1/3. Its function is as follows. Catalyzes the transfer of an acetyl group from acetyl-CoA to tetrahydrodipicolinate. The protein is 2,3,4,5-tetrahydropyridine-2,6-dicarboxylate N-acetyltransferase of Pediococcus pentosaceus (strain ATCC 25745 / CCUG 21536 / LMG 10740 / 183-1w).